A 508-amino-acid chain; its full sequence is Glycerol kinase (508 aa).

Threonine 14 contacts ADP. Positions 14, 15, and 16 each coordinate ATP. Threonine 14 lines the sn-glycerol 3-phosphate pocket. Arginine 18 provides a ligand contact to ADP. Sn-glycerol 3-phosphate-binding residues include arginine 84, glutamate 85, and tyrosine 136. Glycerol is bound by residues arginine 84, glutamate 85, and tyrosine 136. Position 232 is a phosphohistidine; by HPr (histidine 232). Residue aspartate 246 participates in sn-glycerol 3-phosphate binding. 2 residues coordinate glycerol: aspartate 246 and glutamine 247. ADP contacts are provided by threonine 268 and glycine 311. ATP is bound by residues threonine 268, glycine 311, glutamine 315, and glycine 412. Positions 412 and 416 each coordinate ADP.

Belongs to the FGGY kinase family. As to quaternary structure, homotetramer and homodimer (in equilibrium). Post-translationally, the phosphoenolpyruvate-dependent sugar phosphotransferase system (PTS), including enzyme I, and histidine-containing protein (HPr) are required for the phosphorylation, which leads to the activation of the enzyme.

The enzyme catalyses glycerol + ATP = sn-glycerol 3-phosphate + ADP + H(+). The protein operates within polyol metabolism; glycerol degradation via glycerol kinase pathway; sn-glycerol 3-phosphate from glycerol: step 1/1. With respect to regulation, activated by phosphorylation and inhibited by fructose 1,6-bisphosphate (FBP). Key enzyme in the regulation of glycerol uptake and metabolism. Catalyzes the phosphorylation of glycerol to yield sn-glycerol 3-phosphate. The protein is Glycerol kinase of Streptococcus pyogenes serotype M28 (strain MGAS6180).